Consider the following 402-residue polypeptide: Caspase-1 (402 aa).

One can recognise a CARD domain in the interval 1-91 (MADKVLRAKR…YLAEILELQS (91 aa)). Positions 1 to 118 (MADKVLRAKR…PFSSETKEKL (118 aa)) are excised as a propeptide. Catalysis depends on residues histidine 236 and cysteine 284. A propeptide spanning residues 297–314 (SVGNSEEGFLTDAIFEDD) is cleaved from the precursor. At serine 301 the chain carries Phosphoserine.

This sequence belongs to the peptidase C14A family. In terms of assembly, heterotetramer that consists of two anti-parallel arranged heterodimers, each one formed by a 20 kDa (Caspase-1 subunit p20) and a 10 kDa (Caspase-1 subunit p10) subunit. May be a component of the inflammasome, a protein complex which also includes PYCARD, CARD8 and NLRP2 and whose function would be the activation of pro-inflammatory caspases. Component of the AIM2 PANoptosome complex, a multiprotein complex that drives inflammatory cell death (PANoptosis). Both the p10 and p20 subunits interact with MEFV. Interacts with CARD17P/INCA and CARD18. Interacts with SERPINB1; this interaction regulates CASP1 activity. Heterotetramer that consists of two anti-parallel arranged heterodimers, each one formed by a 20 kDa (Caspase-1 subunit p20) and a 10 kDa (Caspase-1 subunit p10) subunit. Post-translationally, the two subunits are derived from the precursor sequence by an autocatalytic mechanism. In terms of processing, ubiquitinated via 'Lys-11'-linked polyubiquitination. Deubiquitinated by USP8.

It localises to the cytoplasm. It is found in the cell membrane. It carries out the reaction Strict requirement for an Asp residue at position P1 and has a preferred cleavage sequence of Tyr-Val-Ala-Asp-|-.. In terms of biological role, thiol protease involved in a variety of inflammatory processes by proteolytically cleaving other proteins, such as the precursors of the inflammatory cytokines interleukin-1 beta (IL1B) and interleukin 18 (IL18) as well as the pyroptosis inducer Gasdermin-D (GSDMD), into active mature peptides. Plays a key role in cell immunity as an inflammatory response initiator: once activated through formation of an inflammasome complex, it initiates a pro-inflammatory response through the cleavage of the two inflammatory cytokines IL1B and IL18, releasing the mature cytokines which are involved in a variety of inflammatory processes. Cleaves a tetrapeptide after an Asp residue at position P1. Also initiates pyroptosis, a programmed lytic cell death pathway, through cleavage of GSDMD. In contrast to cleavage of interleukin IL1B, recognition and cleavage of GSDMD is not strictly dependent on the consensus cleavage site but depends on an exosite interface on CASP1 that recognizes and binds the Gasdermin-D, C-terminal (GSDMD-CT) part. Cleaves and activates CASP7 in response to bacterial infection, promoting plasma membrane repair. Upon inflammasome activation, during DNA virus infection but not RNA virus challenge, controls antiviral immunity through the cleavage of CGAS, rendering it inactive. In apoptotic cells, cleaves SPHK2 which is released from cells and remains enzymatically active extracellularly. The polypeptide is Caspase-1 (Casp1) (Rattus norvegicus (Rat)).